We begin with the raw amino-acid sequence, 276 residues long: Flagellin FljJ (276 aa).

The interval 51–80 (RPGAGDMSGLAREDEPGSGDIDRGRGPRAG) is disordered. Over residues 61–75 (AREDEPGSGDIDRGR) the composition is skewed to basic and acidic residues.

It belongs to the bacterial flagellin family. In C.crescentus, the flagellar filament is composed of multiple flagellins of 29 kDa; 27 kDa and 25 kDa.

Its subcellular location is the secreted. It is found in the bacterial flagellum. Its function is as follows. Flagellin is the subunit protein which polymerizes to form the filaments of bacterial flagella. The chain is Flagellin FljJ (fljJ) from Caulobacter vibrioides (strain ATCC 19089 / CIP 103742 / CB 15) (Caulobacter crescentus).